The chain runs to 215 residues: uncharacterized protein (215 aa).

The N-terminal stretch at M1 to G17 is a signal peptide. Residues G17–N110 form a disordered region. The N-palmitoyl cysteine moiety is linked to residue C18. C18 is lipidated: S-diacylglycerol cysteine. Residues E25–N62 are compositionally biased toward basic and acidic residues. 2 stretches are compositionally biased toward low complexity: residues Q63–N76 and N91–N110.

It is found in the cell membrane. This is an uncharacterized protein from Staphylococcus epidermidis (strain ATCC 35984 / DSM 28319 / BCRC 17069 / CCUG 31568 / BM 3577 / RP62A).